A 27-amino-acid chain; its full sequence is Ganodermin (27 aa).

Functionally, has antifungal activity against B.cinera, F.oxysporum and P.piricola with IC(50) values of 15.2 uM, 12.4 uM and 18.1 uM, respectively. Lacks hemagglutinating activity towards rabbit erythrocytes. Lacks deoxyribonuclease, ribonuclease and protease inhibitory activities. This chain is Ganodermin, found in Ganoderma lucidum (Ling zhi medicinal fungus).